The chain runs to 183 residues: ATP-dependent protease subunit HslV (183 aa).

Residue Thr-13 is part of the active site. Na(+) is bound by residues Gly-168, Cys-171, and Thr-174.

This sequence belongs to the peptidase T1B family. HslV subfamily. In terms of assembly, a double ring-shaped homohexamer of HslV is capped on each side by a ring-shaped HslU homohexamer. The assembly of the HslU/HslV complex is dependent on binding of ATP.

It localises to the cytoplasm. The enzyme catalyses ATP-dependent cleavage of peptide bonds with broad specificity.. Its activity is regulated as follows. Allosterically activated by HslU binding. Its function is as follows. Protease subunit of a proteasome-like degradation complex believed to be a general protein degrading machinery. In Xanthomonas axonopodis pv. citri (strain 306), this protein is ATP-dependent protease subunit HslV.